A 110-amino-acid chain; its full sequence is YGGLGYGGLGYGGLGYGGLGGGCGRGFSGGGLPVATASAAPTGLGVASENRYEGTVGVSGNLPFLGTADVAGEFPTAGIGEIFYGCGNGDVGITREGGLGYGAGYGGGYG.

4 repeat units span residues 1–4, 5–9, 10–14, and 15–19. Residues 1–19 form a 4 X 5 AA tandem repeats of G-Y-G-G-L region; sequence YGGLGYGGLGYGGLGYGGL. Residues 1-27 form a left arm region; sequence YGGLGYGGLGYGGLGYGGLGGGCGRGF. The interval 28-96 is central domain; that stretch reads SGGGLPVATA…GNGDVGITRE (69 aa). The segment at 97–110 is right arm (Gly-rich tandem repeats); it reads GGLGYGAGYGGGYG.

This sequence belongs to the chorion protein family.

Its function is as follows. This protein is one of many from the eggshell of the silk moth. The polypeptide is Chorion class B protein M2410 (Bombyx mori (Silk moth)).